The chain runs to 1658 residues: Collagen alpha-1(XXVII) chain B (1658 aa).

The N-terminal stretch at 1-38 is a signal peptide; sequence MEPDNTPSSRLRAAGVGGRAVFFCMVLYCTCCLRLAQA. One can recognise a Laminin G-like domain in the interval 66-229; the sequence is GVILTTRARI…NYCKYIKKQC (164 aa). The segment covering 308–323 has biased composition (polar residues); the sequence is SIRNRTSQISPKPTQQ. 6 disordered regions span residues 308-332, 345-364, 427-550, 571-614, 637-1332, and 1377-1415; these read SIRNRTSQISPKPTQQNRKKAKKER, VTDSPTSQQQNQVDIPTTTT, GLKG…GNMG, GERG…APGP, GPKG…DAGE, and IIGPSGNPGPQGDKGNKGEMGVQGPRGPPGPRGPPGPPG. The tract at residues 424-1417 is triple-helical region; it reads ELTGLKGEPG…RGPPGPPGLP (994 aa). Collagen-like domains lie at 425–478, 493–552, 556–615, 622–681, 685–744, 748–807, and 811–870; these read LTGL…GNPG, GLVG…MGPK, GFIG…PGPV, GDMG…PGLP, GKPG…PGLE, GPVG…MGLA, and GDRG…RGPD. Residues 434–444 are compositionally biased toward pro residues; it reads LPGPPGPPGQP. Positions 491 to 506 are enriched in low complexity; sequence DPGLVGLPGQPGQPGR. Low complexity-rich tracts occupy residues 657 to 666 and 678 to 692; these read LGLPGEPGEP and PGLPGVQGKPGPQGK. Residues 733–742 are compositionally biased toward gly residues; the sequence is GIPGPGGLPG. 2 stretches are compositionally biased toward low complexity: residues 837 to 852 and 875 to 890; these read RGLSGPAGAPGPHGSR and EKGMMGMKGPEGPPGK. Collagen-like domains lie at 892–951, 952–1011, 1024–1083, 1084–1137, 1139–1198, 1199–1258, 1268–1327, and 1361–1420; these read GLSG…IGLP, GKAG…VGLE, GTEG…IGPK, GSRG…DGKV, GPPG…KGSK, GNKG…PGDL, GKPG…KGQP, and GPQG…PAVA. A compositionally biased stretch (basic and acidic residues) spans 1040-1058; it reads PEGKPGKIGERGKPGEKGS. The span at 1112–1124 shows a compositional bias: low complexity; the sequence is HQGPQGSLGSPGP. Over residues 1125–1137 the composition is skewed to basic and acidic residues; the sequence is KGEKGEQGDDGKV. Over residues 1215–1230 the composition is skewed to low complexity; sequence NRGSPGPVGVPGPRGV. The segment covering 1307 to 1316 has biased composition (gly residues); the sequence is GLNGGMGFPG. Residues 1402 to 1415 are compositionally biased toward pro residues; sequence RGPPGPRGPPGPPG. Residues 1421–1658 constitute a propeptide, C-terminal propeptide; sequence FSHENEALGA…HLEVGPVCFL (238 aa). The Fibrillar collagen NC1 domain occupies 1458–1658; sequence SEIFKTLHYL…HLEVGPVCFL (201 aa). Intrachain disulfides connect cysteine 1488–cysteine 1520, cysteine 1529–cysteine 1656, and cysteine 1565–cysteine 1609. Aspartate 1506, asparagine 1508, cysteine 1511, and aspartate 1514 together coordinate Ca(2+). The N-linked (GlcNAc...) asparagine glycan is linked to asparagine 1567.

This sequence belongs to the fibrillar collagen family. Weakly expressed in the notochord from the 6 somite stage. Expressed throughout the notochord at 13 somites, then becomes restricted to the distal tip of the notochord by 24 hpf. Also expressed in head cartilages by 48 hpf.

The protein localises to the secreted. It localises to the extracellular space. The protein resides in the extracellular matrix. In terms of biological role, may play a role during the calcification of cartilage and the transition of cartilage to bone. Together with col27a1a, plays a role in development of the notochord and axial skeleton. This is Collagen alpha-1(XXVII) chain B (col27a1b) from Danio rerio (Zebrafish).